The primary structure comprises 311 residues: Ribosomal RNA small subunit methyltransferase H 1 (311 aa).

S-adenosyl-L-methionine is bound by residues Ala-33 to His-35, Asp-53, Phe-80, Asp-101, and Gln-108.

It belongs to the methyltransferase superfamily. RsmH family.

Its subcellular location is the cytoplasm. It carries out the reaction cytidine(1402) in 16S rRNA + S-adenosyl-L-methionine = N(4)-methylcytidine(1402) in 16S rRNA + S-adenosyl-L-homocysteine + H(+). Functionally, specifically methylates the N4 position of cytidine in position 1402 (C1402) of 16S rRNA. The chain is Ribosomal RNA small subunit methyltransferase H 1 from Alkaliphilus metalliredigens (strain QYMF).